Consider the following 337-residue polypeptide: RAD51-associated protein 1 (337 aa).

Disordered stretches follow at residues 1–69 and 88–337; these read MVRP…PPKK and LSVK…SQVR. Residues S19 and S23 each carry the phosphoserine modification. A compositionally biased stretch (polar residues) spans 28-38; sequence ISSSTPVNKSK. The interval 32–50 is interaction with DNA; it reads TPVNKSKTVPKVLKQDKPK. Over residues 44–69 the composition is skewed to basic and acidic residues; it reads LKQDKPKPNLKNLQKEEVLPTEPPKK. S103 and S107 each carry phosphoserine. Positions 105 to 118 are enriched in basic and acidic residues; the sequence is EKSTDKQGKEKTEN. The short motif at 138-143 is the SIM motif element; the sequence is LDKITE. A compositionally biased stretch (acidic residues) spans 190 to 205; sequence SESDPDFDESKESDED. Positions 225 to 286 are interaction with DNA; the sequence is GEKKERKSKP…PSAESKRPKW (62 aa). K251 is covalently cross-linked (Glycyl lysine isopeptide (Lys-Gly) (interchain with G-Cter in SUMO; alternate)). A Glycyl lysine isopeptide (Lys-Gly) (interchain with G-Cter in ubiquitin; alternate) cross-link involves residue K251. The WVPP motif motif lies at 286 to 289; the sequence is WVPP. Residues 290–304 show a composition bias toward low complexity; it reads AASGSRNSSSNALAG. Residues 295-334 are interaction with RAD51; sequence RNSSSNALAGTPAKSPSQSLRLGLSRLAPVKRLHPSATSS. S309 carries the phosphoserine modification.

As to quaternary structure, monomer; elongated monodisperse monomer. Interacts (via C-terminal region) with RAD51; the interaction is direct. Interacts (via SIM motif) with WDR48/UAF1; WDR48/UAF1 and RAD51AP1 cooperate together to stimulate RAD51-mediated homologous recombination (HR). Interacts (via WVPP motif) with DMC1; the interaction is direct. Interacts with PALB2. Interacts with RAD52. In terms of processing, sumoylation with SUMO2/3 by NSMCE2/MMS21 promotes stabilization, possibly by preventing ubiquitination. In terms of tissue distribution, most abundantly expressed in testis. Also expressed in spleen, thymus and bone marrow. Not detected in heart, kidney or liver.

Its subcellular location is the chromosome. The protein localises to the nucleus. It is found in the telomere. Functionally, structure-specific DNA-binding protein involved in DNA repair by promoting RAD51-mediated homologous recombination. Acts by stimulating D-Loop formation by RAD51: specifically enhances joint molecule formation through its structure-specific DNA interaction and its interaction with RAD51. Binds single-stranded DNA (ssDNA), double-stranded DNA (dsDNA) and secondary DNA structures, such as D-loop structures: has a strong preference for branched-DNA structures that are obligatory intermediates during joint molecule formation. Cooperates with WDR48/UAF1 to stimulate RAD51-mediated homologous recombination: both WDR48/UAF1 and RAD51AP1 have coordinated role in DNA-binding during homologous recombination and DNA repair. WDR48/UAF1 and RAD51AP1 also have a coordinated role in DNA-binding to promote USP1-mediated deubiquitination of FANCD2. Also involved in meiosis by promoting DMC1-mediated homologous meiotic recombination. The chain is RAD51-associated protein 1 from Mus musculus (Mouse).